The primary structure comprises 216 residues: Soluble inorganic pyrophosphatase 5 (216 aa).

Residues 1–20 (MNGEEVKTSQPQKKLQNPTP) form a disordered region. The segment covering 8–20 (TSQPQKKLQNPTP) has biased composition (polar residues). Substrate-binding residues include K66 and R80. The Proton donor role is filled by Y88. Substrate is bound at residue Y92. The Mg(2+) site is built by D102, D107, and D139. Position 176 (Y176) interacts with substrate.

Belongs to the PPase family. Mg(2+) is required as a cofactor.

Its subcellular location is the cytoplasm. The catalysed reaction is diphosphate + H2O = 2 phosphate + H(+). The sequence is that of Soluble inorganic pyrophosphatase 5 from Arabidopsis thaliana (Mouse-ear cress).